Reading from the N-terminus, the 205-residue chain is GTP cyclohydrolase 1 (205 aa).

Residues C95, H98, and C166 each coordinate Zn(2+).

The protein belongs to the GTP cyclohydrolase I family. Toroid-shaped homodecamer, composed of two pentamers of five dimers.

The enzyme catalyses GTP + H2O = 7,8-dihydroneopterin 3'-triphosphate + formate + H(+). The protein operates within cofactor biosynthesis; 7,8-dihydroneopterin triphosphate biosynthesis; 7,8-dihydroneopterin triphosphate from GTP: step 1/1. The chain is GTP cyclohydrolase 1 from Maricaulis maris (strain MCS10) (Caulobacter maris).